Consider the following 387-residue polypeptide: Capsid protein (387 aa).

Basic residues predominate over residues 1-33 (MARTKSKPRKRTTVRKARRSVKRRTTTKGTKRK). 2 disordered regions span residues 1–47 (MART…RGVA) and 365–387 (KSAK…REFN). 2 short sequence motifs (nuclear localization signal) span residues 8 to 15 (PRKRTTVR) and 30 to 37 (TKRKTAGD). Over residues 370–379 (NDQLNNNQDA) the composition is skewed to low complexity.

It localises to the host nucleus. The protein resides in the virion. Its function is as follows. Self-assembles to form the virion icosahedral capsid. The protein is Capsid protein of Chaetoceros protobacilladnavirus 2 (Chaetoceros sp. DNA virus 7).